We begin with the raw amino-acid sequence, 91 residues long: Large ribosomal subunit protein uL29 (91 aa).

The segment at 67-91 (AAPLAESSAPAKTKSRARKSKKEAL) is disordered. Over residues 79–91 (TKSRARKSKKEAL) the composition is skewed to basic residues.

This sequence belongs to the universal ribosomal protein uL29 family.

The protein is Large ribosomal subunit protein uL29 of Acidobacterium capsulatum (strain ATCC 51196 / DSM 11244 / BCRC 80197 / JCM 7670 / NBRC 15755 / NCIMB 13165 / 161).